Consider the following 117-residue polypeptide: Ig heavy chain V region 186-1 (117 aa).

The first 19 residues, methionine 1–serine 19, serve as a signal peptide directing secretion. The segment at glutamine 20–threonine 49 is framework-1. Cysteines 41 and 115 form a disulfide. Residues serine 50–histidine 54 form a complementarity-determining-1 region. Residues tryptophan 55 to glycine 68 form a framework-2 region. Positions arginine 69–serine 85 are complementarity-determining-2. The framework-3 stretch occupies residues lysine 86 to arginine 117.

In Mus musculus (Mouse), this protein is Ig heavy chain V region 186-1.